Reading from the N-terminus, the 190-residue chain is UPF0340 protein BC_5317 (190 aa).

The protein belongs to the UPF0340 family.

In Bacillus cereus (strain ATCC 14579 / DSM 31 / CCUG 7414 / JCM 2152 / NBRC 15305 / NCIMB 9373 / NCTC 2599 / NRRL B-3711), this protein is UPF0340 protein BC_5317.